The following is a 236-amino-acid chain: Probable glutathione S-transferase BZ2 (236 aa).

The GST N-terminal domain occupies 1–80 (MRVLGGEVSP…YIEDVARESG (80 aa)). Glutathione-binding positions include serine 9, lysine 37, isoleucine 51, and 64 to 65 (ES). Residues 92–221 (DPYERAMHRF…LPDTEKVVQF (130 aa)) enclose the GST C-terminal domain.

It belongs to the GST superfamily. HSP26 family.

It catalyses the reaction RX + glutathione = an S-substituted glutathione + a halide anion + H(+). It functions in the pathway pigment biosynthesis; anthocyanin biosynthesis. The polypeptide is Probable glutathione S-transferase BZ2 (BZ2) (Zea mays (Maize)).